The chain runs to 127 residues: Fumarate reductase subunit C (127 aa).

Transmembrane regions (helical) follow at residues 30–50 (ATIL…GSLV), 67–87 (IVVA…QTFF), and 107–127 (VVVL…LVIV).

This sequence belongs to the FrdC family. In terms of assembly, part of an enzyme complex containing four subunits: a flavoprotein (FrdA), an iron-sulfur protein (FrdB), and two hydrophobic anchor proteins (FrdC and FrdD).

The protein resides in the cell inner membrane. Functionally, anchors the catalytic components of the fumarate reductase complex to the cell membrane, binds quinones. This chain is Fumarate reductase subunit C, found in Aliivibrio salmonicida (strain LFI1238) (Vibrio salmonicida (strain LFI1238)).